The sequence spans 291 residues: MAVVTMKNLLESGVHFGHQVKRWDPRMKKYIFSERNGIHIIDLQKTIVAIREAYEAVRKTTSEGKSVLFVGTKKQAQQTIQKEAERCGMFYINNRWLGGMLTNFSTIKKSLARLKKIEKMEVDGTFDNLTKKEIASLQKEKSKLEKNLGGIKEMKDLPGILFIIDTRKEEIAIREARSLGIPIIAVVDTNCNPEGIDYPIPGNDDAIRAISLFTGVIANAVIEADNEHGLKIIENLQEDEESGDSGVDPYQDREEEITDYSNYTPKDEASGDDEDEEDNSLVNDEDLYDDK.

The disordered stretch occupies residues 235–291 (NLQEDEESGDSGVDPYQDREEEITDYSNYTPKDEASGDDEDEEDNSLVNDEDLYDDK). A compositionally biased stretch (acidic residues) spans 270–291 (SGDDEDEEDNSLVNDEDLYDDK).

Belongs to the universal ribosomal protein uS2 family.

This is Small ribosomal subunit protein uS2 from Treponema denticola (strain ATCC 35405 / DSM 14222 / CIP 103919 / JCM 8153 / KCTC 15104).